The sequence spans 326 residues: Putative ABC transporter ATP-binding protein MPN_334 (326 aa).

The 233-residue stretch at 7 to 239 folds into the ABC transporter domain; sequence VEVKHLEKEF…NFGYRLKVNN (233 aa). ATP is bound at residue 42-49; it reads GQNGAGKT.

This sequence belongs to the ABC transporter superfamily.

The sequence is that of Putative ABC transporter ATP-binding protein MPN_334 from Mycoplasma pneumoniae (strain ATCC 29342 / M129 / Subtype 1) (Mycoplasmoides pneumoniae).